Consider the following 508-residue polypeptide: 2,3-bisphosphoglycerate-independent phosphoglycerate mutase (508 aa).

Mn(2+)-binding residues include aspartate 14 and serine 64. The Phosphoserine intermediate role is filled by serine 64. Residues histidine 125, 155–156 (RD), arginine 187, arginine 193, 259–262 (RADR), and lysine 332 contribute to the substrate site. The Mn(2+) site is built by aspartate 399, histidine 403, aspartate 440, histidine 441, and histidine 459.

Belongs to the BPG-independent phosphoglycerate mutase family. Monomer. Mn(2+) serves as cofactor.

The enzyme catalyses (2R)-2-phosphoglycerate = (2R)-3-phosphoglycerate. It functions in the pathway carbohydrate degradation; glycolysis; pyruvate from D-glyceraldehyde 3-phosphate: step 3/5. Catalyzes the interconversion of 2-phosphoglycerate and 3-phosphoglycerate. This is 2,3-bisphosphoglycerate-independent phosphoglycerate mutase from Pseudomonas fluorescens (strain Pf0-1).